A 313-amino-acid polypeptide reads, in one-letter code: MSTREIRIATRKSALALWQAEYVKARLEQAHTGLQVTLVPMVSRGDKLLDAPLAKIGGKGLFVKELETALLDNEADIAVHSMKDVPMDFPEGLGLYCICEREDPRDAFVSNTFDSLEALPAGSIVGTSSLRRQAQLLARRPDLQIRFLRGNVNTRLAKLDAGEYDAIILAAAGLIRLGFEDRITSTISVDDSLPAGGQGAVGIECRSADVEIHALLAPLHHVDTADRVIAERALNKRLNGGCQVPIACYAVLEGDQLWLRGLVGQPSGGTLLVADARAPRAAAEALGVQVAEDLLGQGAEAILKEVYGEAGHP.

Position 242 is an S-(dipyrrolylmethanemethyl)cysteine (Cys-242).

It belongs to the HMBS family. Monomer. The cofactor is dipyrromethane.

It catalyses the reaction 4 porphobilinogen + H2O = hydroxymethylbilane + 4 NH4(+). It participates in porphyrin-containing compound metabolism; protoporphyrin-IX biosynthesis; coproporphyrinogen-III from 5-aminolevulinate: step 2/4. Its function is as follows. Tetrapolymerization of the monopyrrole PBG into the hydroxymethylbilane pre-uroporphyrinogen in several discrete steps. This Pseudomonas putida (strain ATCC 47054 / DSM 6125 / CFBP 8728 / NCIMB 11950 / KT2440) protein is Porphobilinogen deaminase.